The following is a 231-amino-acid chain: Nuclear transcription factor Y subunit C-9 (231 aa).

The segment at 211–231 (NPYMGQPMWQQQAPDQPDQEN) is disordered.

The protein belongs to the NFYC/HAP5 subunit family. As to quaternary structure, heterotrimeric transcription factor composed of three components, NF-YA, NF-YB and NF-YC. Interacts with NFYA2, NFYB2, CO and RGA. Interacts with REF6 (via N-terminus). Ubiquitous. Present in etiolated seedlings.

The protein resides in the nucleus. Functionally, stimulates the transcription of various genes by recognizing and binding to a CCAAT motif in promoters. Interacts with REF6 to directly regulate SOC1 transcription in response to flowering signals from photoperiod and gibberellic acid pathways. This is Nuclear transcription factor Y subunit C-9 (NFYC9) from Arabidopsis thaliana (Mouse-ear cress).